Reading from the N-terminus, the 401-residue chain is Acetate kinase (401 aa).

Residue N7 coordinates Mg(2+). An ATP-binding site is contributed by K14. Position 91 (R91) interacts with substrate. D148 serves as the catalytic Proton donor/acceptor. Residues 208–212 (HLGNG), 283–285 (DFR), and 332–336 (GVGEN) each bind ATP. E385 is a Mg(2+) binding site.

Belongs to the acetokinase family. In terms of assembly, homodimer. Mg(2+) serves as cofactor. Mn(2+) is required as a cofactor.

It localises to the cytoplasm. It catalyses the reaction acetate + ATP = acetyl phosphate + ADP. Its pathway is metabolic intermediate biosynthesis; acetyl-CoA biosynthesis; acetyl-CoA from acetate: step 1/2. Its function is as follows. Catalyzes the formation of acetyl phosphate from acetate and ATP. Can also catalyze the reverse reaction. In Caldanaerobacter subterraneus subsp. tengcongensis (strain DSM 15242 / JCM 11007 / NBRC 100824 / MB4) (Thermoanaerobacter tengcongensis), this protein is Acetate kinase.